The primary structure comprises 340 residues: Adenine deaminase (340 aa).

Positions 17, 19, and 197 each coordinate Zn(2+). E200 (proton donor) is an active-site residue. D278 provides a ligand contact to Zn(2+). Residue D279 coordinates substrate.

It belongs to the metallo-dependent hydrolases superfamily. Adenosine and AMP deaminases family. Adenine deaminase type 2 subfamily. It depends on Zn(2+) as a cofactor.

It carries out the reaction adenine + H2O + H(+) = hypoxanthine + NH4(+). Catalyzes the hydrolytic deamination of adenine to hypoxanthine. Plays an important role in the purine salvage pathway and in nitrogen catabolism. This Streptomyces coelicolor (strain ATCC BAA-471 / A3(2) / M145) protein is Adenine deaminase.